We begin with the raw amino-acid sequence, 262 residues long: Abhydrolase domain-containing protein ACTT2-2 (262 aa).

The Peroxisomal targeting signal type 1 signature appears at 260–262 (SKL).

It belongs to the AB hydrolase superfamily. AKT2 hydrolase family.

The protein localises to the peroxisome. It functions in the pathway mycotoxin biosynthesis. Functionally, abhydrolase domain-containing protein; part of the gene clusters that mediate the biosynthesis of the host-selective toxins (HSTs) ACT-toxins responsible for brown spot of tangerine disease by the tangerine pathotype which affects tangerines and mandarins. ACT-toxins consist of three moieties, 9,10-epoxy-8-hydroxy-9-methyl-decatrienoic acid (EDA), valine and a polyketide. ACT-toxin I is toxic to both citrus and pear; toxin II the 5''-deoxy derivative of ACT-toxin I, is highly toxic to pear and slightly toxic to citrus. On cellular level, ACT-toxins affect plasma membrane of susceptible cells and cause a sudden increase in loss of K(+) after a few minutes of toxin treatment. The acyl-CoA ligase ACTT1, the hydrolase ACTT2, the enoyl-CoA hydratases ACTT3 and ACTT6, and the acyl-CoA synthetase ACTT5 are all involved in the biosynthesis of the AK-, AF- and ACT-toxin common 9,10-epoxy-8-hydroxy-9-methyl-decatrienoic acid (EDA) structural moiety. The exact role of each enzyme, and of additional enzymes identified within the AF-toxin clusters have still to be determined. On the other hand, ACTTS1 to ACTTS4 are specific to the tangerine pathotype. The function of ACTTS3 is to elongate the polyketide chain portion of ACT-toxin that is unique to this toxin. The enoyl-reductase ACTTS2 might complement the missing enoyl-reductase (ER) domain in ACTTS3 in the synthesis of the polyketide portion of ACT-toxin. The roles of the nonribosomal peptide synthetases-related proteins ACTTS1 and ACTTS4 have also still not been elucidated. The protein is Abhydrolase domain-containing protein ACTT2-2 (ACTT2-2) of Alternaria alternata (Alternaria rot fungus).